The following is a 499-amino-acid chain: Taxadiene 5-alpha hydroxylase (499 aa).

A helical; Signal-anchor membrane pass occupies residues 22–42 (TESFSIALSAIAGILLLLLLF). Cys-445 lines the heme pocket.

The protein belongs to the cytochrome P450 family. Requires heme as cofactor.

It localises to the membrane. The enzyme catalyses taxa-4(5),11(12)-diene + reduced [NADPH--hemoprotein reductase] + O2 = taxa-4(20),11-dien-5alpha-ol + oxidized [NADPH--hemoprotein reductase] + H2O + H(+). It functions in the pathway alkaloid biosynthesis; taxol biosynthesis; taxa-4(20),11-dien-5alpha-ol from geranylgeranyl diphosphate: step 2/2. Catalyzes the first oxygenation step of taxol biosynthesis. Can use both taxa-4(5),11(12)-diene and taxa-4(20),11(12)-diene as substrate. In Taxus cuspidata (Japanese yew), this protein is Taxadiene 5-alpha hydroxylase.